Here is a 206-residue protein sequence, read N- to C-terminus: Large ribosomal subunit protein uL3 (206 aa).

Residues 116 to 149 (GFQGAIKRHNQSRGPMSHGSRYHRRPGSMGPVAP) form a disordered region.

Belongs to the universal ribosomal protein uL3 family. In terms of assembly, part of the 50S ribosomal subunit. Forms a cluster with proteins L14 and L19.

Functionally, one of the primary rRNA binding proteins, it binds directly near the 3'-end of the 23S rRNA, where it nucleates assembly of the 50S subunit. The sequence is that of Large ribosomal subunit protein uL3 from Shouchella clausii (strain KSM-K16) (Alkalihalobacillus clausii).